The sequence spans 462 residues: C4-dicarboxylate transport transcriptional regulatory protein DctD (462 aa).

Residues 12–126 (QVLLIDDDPH…ALLDSVRRAL (115 aa)) form the Response regulatory domain. Aspartate 61 is modified (4-aspartylphosphate). The Sigma-54 factor interaction domain maps to 152–381 (LIGRSAGMQR…LQNAAERFAL (230 aa)). ATP-binding positions include 180 to 187 (GETGAGKE) and 243 to 252 (ANGGTLFLDE).

In terms of processing, phosphorylated by DctB.

Its function is as follows. Member of the two-component regulatory system DctB/DctD, which regulates C4-dicarboxylate transport via regulation of expression of the dctPQM operon and dctA. The polypeptide is C4-dicarboxylate transport transcriptional regulatory protein DctD (Pseudomonas aeruginosa (strain ATCC 15692 / DSM 22644 / CIP 104116 / JCM 14847 / LMG 12228 / 1C / PRS 101 / PAO1)).